The chain runs to 299 residues: Non-structural protein V (299 aa).

A disordered region spans residues 40–98 (SDNPGQEQATCKEEEAGASGLSKPCLSAIGSTEGGAPRIRGQGSGESDDDTETLGFPSR). Positions 110–120 (YYVYDHSGEAV) are interaction with host STAT1. Residues 134 to 145 (GLDGDSTLSGGD) are compositionally biased toward low complexity. Disordered stretches follow at residues 134–174 (GLDG…APIS) and 204–230 (PKLGKTLNVPPPPDPGRASTSETPIKK). Residues 146 to 160 (NESENSDVDIGEPDT) show a composition bias toward acidic residues. Residues H232, C251, C255, C267, C269, C272, C276, and C279 each coordinate Zn(2+).

It belongs to the paramyxoviruses V protein family. In terms of assembly, interacts with host IFIH1/MDA5 and DHX58/LGP2; these interactions are involved in the inhibition of the host type I interferon signaling pathway. Interacts with host TYK2; this interaction inhibits the type I interferon signaling pathway without affecting the type II pathway. Interacts with host IRF7; this interaction inhibits IRF7 translocation to the nucleus. Interacts with host CHUK. Interacts with host RELA/p65; this interaction inhibits the nuclear translocation of NF-KappaB. Interacts (via N-terminus) with host STAT1 and JAK1; these interactions inhibit STAT1 phosphorylation by Jak1 and thereby the type I interferon signaling pathway. Interacts (via C-terminus) with host STAT2; this interaction is involved in the inhibition of the host type I interferon signaling pathway. Forms a complex with host PPP1CA and PPP1CC; this interaction prevents dephosphorylation of host IFIH1/MDA5 and leads to the inhibition of the host type I interferon signaling pathway. Interacts with host IRF9; this interaction prevents the binding of IRF9 to STAT2 and thereby the type I interferon signaling pathway. Interacts with host RIGI regulatory protein (via CARDs domain) and host TRIM25 (via SPRY domain); these interactions prevent TRIM25-mediated ubiquitination of RIG-I and disrupts downstream RIG-I signaling.

It localises to the host cytoplasm. Its function is as follows. Plays an essential role in the inhibition of host immune response. Prevents the establishment of cellular antiviral state by blocking interferon-alpha/beta (IFN-alpha/beta) production and signaling pathway. Interacts with host IFIH1/MDA5 and DHX58/LGP2 to inhibit the transduction pathway involved in the activation of IFN-beta promoter, thus protecting the virus against cell antiviral state. Blocks the type I interferon signaling pathway by interacting with host TYK2 and thereby inhibiting downstream STAT1 and STAT2 phosphorylation. Blocks the type I interferon signaling pathway by disrupting the RIG-I signaling pathway. Moderately affects the type II interferon signaling. Prevents PP1alpha/gamma-mediated dephosphorylation of host IFIH1/MDA5 and thus blocks its activation. This is Non-structural protein V (P/V) from Measles virus (strain IP-3-Ca) (MeV).